Consider the following 155-residue polypeptide: Large ribosomal subunit protein eL24A (155 aa).

Ser-7 carries the post-translational modification Phosphoserine. The interval 66–155 is disordered; sequence EVAKKRSRKT…AFQKVAATSR (90 aa). A compositionally biased stretch (basic and acidic residues) spans 89-129; sequence LIKERRSLKPEVRKANREEKLKANKEKKKAEKAARKAEKAK. Residues 131-142 show a composition bias toward polar residues; it reads AGTQSSKFSKQQ.

This sequence belongs to the eukaryotic ribosomal protein eL24 family. As to quaternary structure, component of the large ribosomal subunit (LSU). Mature yeast ribosomes consist of a small (40S) and a large (60S) subunit. The 40S small subunit contains 1 molecule of ribosomal RNA (18S rRNA) and 33 different proteins (encoded by 57 genes). The large 60S subunit contains 3 rRNA molecules (25S, 5.8S and 5S rRNA) and 46 different proteins (encoded by 81 genes).

It localises to the cytoplasm. Its function is as follows. Component of the ribosome, a large ribonucleoprotein complex responsible for the synthesis of proteins in the cell. The small ribosomal subunit (SSU) binds messenger RNAs (mRNAs) and translates the encoded message by selecting cognate aminoacyl-transfer RNA (tRNA) molecules. The large subunit (LSU) contains the ribosomal catalytic site termed the peptidyl transferase center (PTC), which catalyzes the formation of peptide bonds, thereby polymerizing the amino acids delivered by tRNAs into a polypeptide chain. The nascent polypeptides leave the ribosome through a tunnel in the LSU and interact with protein factors that function in enzymatic processing, targeting, and the membrane insertion of nascent chains at the exit of the ribosomal tunnel. This chain is Large ribosomal subunit protein eL24A, found in Saccharomyces cerevisiae (strain ATCC 204508 / S288c) (Baker's yeast).